The chain runs to 1070 residues: DNA-directed RNA polymerase subunit beta (1070 aa).

This sequence belongs to the RNA polymerase beta chain family. In plastids the minimal PEP RNA polymerase catalytic core is composed of four subunits: alpha, beta, beta', and beta''. When a (nuclear-encoded) sigma factor is associated with the core the holoenzyme is formed, which can initiate transcription.

It localises to the plastid. It is found in the chloroplast. It catalyses the reaction RNA(n) + a ribonucleoside 5'-triphosphate = RNA(n+1) + diphosphate. Functionally, DNA-dependent RNA polymerase catalyzes the transcription of DNA into RNA using the four ribonucleoside triphosphates as substrates. This chain is DNA-directed RNA polymerase subunit beta, found in Nandina domestica (Heavenly bamboo).